The sequence spans 476 residues: PTS system N-acetylmuramic acid-specific EIIBC component (476 aa).

The PTS EIIB type-1 domain occupies M1–S89. C28 acts as the Phosphocysteine intermediate; for EIIB activity in catalysis. The region spanning A116–S476 is the PTS EIIC type-1 domain. Transmembrane regions (helical) follow at residues F118–L138, L160–G180, A186–N206, F220–V240, T265–F285, V304–V324, L337–F357, G371–P391, F396–L416, and V443–I463.

The protein localises to the cell inner membrane. The catalysed reaction is N-acetyl-beta-D-muramate(out) + N(pros)-phospho-L-histidyl-[protein] = N-acetyl-beta-D-muramate 6-phosphate(in) + L-histidyl-[protein]. Its function is as follows. The phosphoenolpyruvate-dependent sugar phosphotransferase system (sugar PTS), a major carbohydrate active transport system, catalyzes the phosphorylation of incoming sugar substrates concomitantly with their translocation across the cell membrane. This system is involved in N-acetylmuramic acid (MurNAc) transport, yielding cytoplasmic MurNAc-6-P. Is also able to take up anhydro-N-acetylmuramic acid (anhMurNAc), but cannot phosphorylate the carbon 6, probably because of the 1,6-anhydro ring. The chain is PTS system N-acetylmuramic acid-specific EIIBC component (murP) from Pasteurella multocida (strain Pm70).